Consider the following 99-residue polypeptide: Protein Frey (99 aa).

A helical transmembrane segment spans residues 7-29; that stretch reads GALYPRAGLSLFLLYLVLAAVLL. The tract at residues 65–88 is disordered; the sequence is PKHPWPRGPRPLLSRAQQRKRDGP.

In terms of assembly, interacts with SPPL2C (via active sites); the interaction stabilizes FREY1 protein and inhibits SPPL2C proteolytic activity. Interacts with IZUMO1; the interaction retains IZUMO1 at the endoplasmic reticulum membrane and coordinates IZUMO1 complex assembly.

It is found in the endoplasmic reticulum membrane. In terms of biological role, key regulator for male fertility expressed transiently in round spermatids where it recruits IZUMO1 at the endoplasmic reticulum (ER) membrane and coordinates the oolemmal binding multimeric complex (IZUMO1 complex) assembly. Upon complete assembly of the IZUMO1 complex, its ER retention is released, facilitating IZUMO1 complex export to the acrosome. Through the interaction with SPPL2C, inhibits its intramembrane protease activity directly accessing the catalytic center of an I-CLiP. The polypeptide is Protein Frey (Ailuropoda melanoleuca (Giant panda)).